We begin with the raw amino-acid sequence, 188 residues long: Ribosome maturation factor RimM (188 aa).

The region spanning 98–174 is the PRC barrel domain; the sequence is EGTFYYHDLR…HLTADAPAGL (77 aa). A disordered region spans residues 169–188; the sequence is DAPAGLIGPEPGEEDGAAES. A compositionally biased stretch (acidic residues) spans 179–188; that stretch reads PGEEDGAAES.

It belongs to the RimM family. Binds ribosomal protein uS19.

It localises to the cytoplasm. In terms of biological role, an accessory protein needed during the final step in the assembly of 30S ribosomal subunit, possibly for assembly of the head region. Essential for efficient processing of 16S rRNA. May be needed both before and after RbfA during the maturation of 16S rRNA. It has affinity for free ribosomal 30S subunits but not for 70S ribosomes. This chain is Ribosome maturation factor RimM, found in Deinococcus radiodurans (strain ATCC 13939 / DSM 20539 / JCM 16871 / CCUG 27074 / LMG 4051 / NBRC 15346 / NCIMB 9279 / VKM B-1422 / R1).